We begin with the raw amino-acid sequence, 140 residues long: Cysteine desulfuration protein SufE (140 aa).

Cysteine 51 functions as the Cysteine persulfide intermediate in the catalytic mechanism.

This sequence belongs to the SufE family. In terms of assembly, homodimer. Interacts with SufS.

The protein resides in the cytoplasm. It functions in the pathway cofactor biosynthesis; iron-sulfur cluster biosynthesis. Participates in cysteine desulfuration mediated by SufS. Cysteine desulfuration mobilizes sulfur from L-cysteine to yield L-alanine and constitutes an essential step in sulfur metabolism for biosynthesis of a variety of sulfur-containing biomolecules. Functions as a sulfur acceptor for SufS, by mediating the direct transfer of the sulfur atom from the S-sulfanylcysteine of SufS, an intermediate product of cysteine desulfuration process. This chain is Cysteine desulfuration protein SufE, found in Yersinia enterocolitica serotype O:8 / biotype 1B (strain NCTC 13174 / 8081).